Reading from the N-terminus, the 94-residue chain is Large ribosomal subunit protein bL28A (94 aa).

Residues 63 to 94 (GHRGRRRAARAGSAPAHFARQAGSSLRTAAIL) form a disordered region. Positions 72-82 (RAGSAPAHFAR) are enriched in low complexity. The segment covering 84–94 (AGSSLRTAAIL) has biased composition (polar residues).

The protein belongs to the bacterial ribosomal protein bL28 family.

This is Large ribosomal subunit protein bL28A (rpmB1) from Mycobacterium bovis (strain ATCC BAA-935 / AF2122/97).